Reading from the N-terminus, the 333-residue chain is Chitinase-like protein 2 (333 aa).

The N-terminal stretch at 1–27 (MVSKPLFSLLLLTVALVVFQTGTLVNA) is a signal peptide. Residues C50 and C56 are joined by a disulfide bond. A glycan (N-linked (GlcNAc...) asparagine) is linked at N65. A disulfide bridge connects residues C165 and C175. N-linked (GlcNAc...) asparagine glycosylation is found at N216 and N252. A disulfide bridge links C275 with C313. Residues 307–333 (PHEKLSCADQEPFSSSSSAPPSSGSSS) are disordered. The span at 320 to 333 (SSSSSAPPSSGSSS) shows a compositional bias: low complexity.

This sequence belongs to the glycosyl hydrolase 19 family. As to expression, mostly expressed in stems, especially in xylem and interfascicular fibers.

It localises to the secreted. Its function is as follows. No chitinase activity. Required for proper cell wall biosynthesis in etiolated seedlings. Prevents lignin accumulation in hypocotyls. The chain is Chitinase-like protein 2 (CTL2) from Arabidopsis thaliana (Mouse-ear cress).